Reading from the N-terminus, the 211-residue chain is MAEQHGAPEQAAAGKSHGGLGGSYKVTVYELENFQGKRCELSAECPNLTDSLLEKVGSIQVESGPWLAFERRAFRGEQFVLEKGDYPRWDAWSSSRRSDILLSLRPLHIDGPDHKLHLFENPAFSGRKMEIVDDDVPSLWAHGFQDRVASIRVINGTWVGYEFPGYRGRQYVFERGEFRHWNEWDANQPQLQSVRRIRDQKWHKRGCFLSS.

Met-1 bears the N-acetylmethionine mark. Ala-2 bears the N-acetylalanine; in Beta-crystallin B3, N-terminally processed mark. Residues 2–23 (AEQHGAPEQAAAGKSHGGLGGS) form an N-terminal arm region. Beta/gamma crystallin 'Greek key' domains follow at residues 24 to 63 (YKVT…QVES) and 64 to 108 (GPWL…RPLH). The interval 109–113 (IDGPD) is connecting peptide. 2 Beta/gamma crystallin 'Greek key' domains span residues 114–155 (HKLH…RVIN) and 156–198 (GTWV…RRIR). Residues 200-211 (QKWHKRGCFLSS) form a C-terminal arm region.

Belongs to the beta/gamma-crystallin family. Homo/heterodimer, or complexes of higher-order. The structure of beta-crystallin oligomers seems to be stabilized through interactions between the N-terminal arms.

Its function is as follows. Crystallins are the dominant structural components of the vertebrate eye lens. In Mus musculus (Mouse), this protein is Beta-crystallin B3 (Crybb3).